The following is a 92-amino-acid chain: Small ribosomal subunit protein uS19c (92 aa).

This sequence belongs to the universal ribosomal protein uS19 family.

Its subcellular location is the plastid. It is found in the chloroplast. Its function is as follows. Protein S19 forms a complex with S13 that binds strongly to the 16S ribosomal RNA. The protein is Small ribosomal subunit protein uS19c of Nymphaea alba (White water-lily).